The following is a 67-amino-acid chain: DNA-directed RNA polymerase subunit omega (67 aa).

The protein belongs to the RNA polymerase subunit omega family. In terms of assembly, the RNAP catalytic core consists of 2 alpha, 1 beta, 1 beta' and 1 omega subunit. When a sigma factor is associated with the core the holoenzyme is formed, which can initiate transcription.

It catalyses the reaction RNA(n) + a ribonucleoside 5'-triphosphate = RNA(n+1) + diphosphate. Functionally, promotes RNA polymerase assembly. Latches the N- and C-terminal regions of the beta' subunit thereby facilitating its interaction with the beta and alpha subunits. This chain is DNA-directed RNA polymerase subunit omega, found in Moorella thermoacetica (strain ATCC 39073 / JCM 9320).